Consider the following 59-residue polypeptide: Putative potassium channel toxin Ts23 (59 aa).

An N-terminal signal peptide occupies residues methionine 1–glutamine 22. 3 cysteine pairs are disulfide-bonded: cysteine 29–cysteine 50, cysteine 35–cysteine 55, and cysteine 39–cysteine 57.

It belongs to the short scorpion toxin superfamily. Potassium channel inhibitor family. Alpha-KTx 04 subfamily. In terms of tissue distribution, expressed by the venom gland.

The protein localises to the secreted. In terms of biological role, potently blocks Kv1.1/KCNA1 (85%), Kv1.2/KCNA2 (91%), Kv1.3/KCNA3 (89%), Kv1.6/KCNA6 (94%), and Shaker (97%). In Tityus serrulatus (Brazilian scorpion), this protein is Putative potassium channel toxin Ts23.